Consider the following 451-residue polypeptide: AAA-ATPase At3g50940 (451 aa).

Positions 1 to 25 (MSSSSESHLATAKTALTAVASVAAA) are cleaved as a signal peptide. 254–261 (GPPGTGKS) provides a ligand contact to ATP.

It belongs to the AAA ATPase family. BCS1 subfamily. It depends on Mg(2+) as a cofactor.

The catalysed reaction is ATP + H2O = ADP + phosphate + H(+). This Arabidopsis thaliana (Mouse-ear cress) protein is AAA-ATPase At3g50940.